The primary structure comprises 391 residues: Histamine H4 receptor (391 aa).

The Extracellular segment spans residues 1–19; it reads MSESNGTDVLPLTAQVPLA. Asparagine 5 is a glycosylation site (N-linked (GlcNAc...) asparagine). A helical transmembrane segment spans residues 20 to 40; that stretch reads FLMSLLAFAITIGNAVVILAF. The Cytoplasmic portion of the chain corresponds to 41-52; sequence VADRNLRHRSNY. The chain crosses the membrane as a helical span at residues 53 to 73; sequence FFLNLAISDFFVGVISIPLYI. The Extracellular segment spans residues 74-87; the sequence is PHTLFNWNFGSGIC. An intrachain disulfide couples cysteine 87 to cysteine 166. A helical membrane pass occupies residues 88–108; that stretch reads MFWLITDYLLCTASVYSIVLI. At 109-131 the chain is on the cytoplasmic side; sequence SYDRYQSVSNAVRYRAQHTGILK. Residues 132–152 form a helical membrane-spanning segment; the sequence is IVAQMVAVWILAFLVNGPMIL. Over 153-174 the chain is Extracellular; sequence ASDSWKNSTNTEECEPGFVTEW. The N-linked (GlcNAc...) asparagine glycan is linked to asparagine 159. Residues 175-195 traverse the membrane as a helical segment; the sequence is YILAITAFLEFLLPVSLVVYF. Topologically, residues 196-306 are cytoplasmic; it reads SVQIYWSLWK…LLRGRKLARS (111 aa). A helical transmembrane segment spans residues 307-327; it reads LAVLLSAFAICWAPYCLFTIV. The Extracellular segment spans residues 328-343; that stretch reads LSTYRRGERPKSIWYS. Residues 344–364 traverse the membrane as a helical segment; sequence IAFWLQWFNSLINPFLYPLCH. Topologically, residues 365–391 are cytoplasmic; it reads RRFQKAFWKILCVTKQPAPSQTQSVSS.

It belongs to the G-protein coupled receptor 1 family. Interacts with TSPAN4.

The protein localises to the cell membrane. Functionally, the H4 subclass of histamine receptors could mediate the histamine signals in peripheral tissues. Displays a significant level of constitutive activity (spontaneous activity in the absence of agonist). This chain is Histamine H4 receptor (Hrh4), found in Rattus norvegicus (Rat).